Consider the following 367-residue polypeptide: Methylthioribose-1-phosphate isomerase (367 aa).

Substrate-binding positions include 48 to 50, R91, and Q215; that span reads RGA. D256 serves as the catalytic Proton donor. 266–267 is a binding site for substrate; that stretch reads NK.

Belongs to the eIF-2B alpha/beta/delta subunits family. MtnA subfamily.

It carries out the reaction 5-(methylsulfanyl)-alpha-D-ribose 1-phosphate = 5-(methylsulfanyl)-D-ribulose 1-phosphate. It functions in the pathway amino-acid biosynthesis; L-methionine biosynthesis via salvage pathway; L-methionine from S-methyl-5-thio-alpha-D-ribose 1-phosphate: step 1/6. Catalyzes the interconversion of methylthioribose-1-phosphate (MTR-1-P) into methylthioribulose-1-phosphate (MTRu-1-P). This chain is Methylthioribose-1-phosphate isomerase, found in Syntrophus aciditrophicus (strain SB).